The chain runs to 956 residues: MTRRTMEKPFGCFLLLFCFTISIFFYSAAALTDEEASFLTRRQLLALSENGDLPDDIEYEVDLDLKFANNRLKRAYIALQAWKKAFYSDPFNTAANWVGPDVCSYKGVFCAPALDDPSVLVVAGIDLNHADIAGYLPPELGLLTDVALFHVNSNRFCGVIPKSLSKLTLMYEFDVSNNRFVGPFPTVALSWPSLKFLDIRYNDFEGKLPPEIFDKDLDAIFLNNNRFESTIPETIGKSTASVVTFAHNKFSGCIPKTIGQMKNLNEIVFIGNNLSGCLPNEIGSLNNVTVFDASSNGFVGSLPSTLSGLANVEQMDFSYNKFTGFVTDNICKLPKLSNFTFSYNFFNGEAQSCVPGSSQEKQFDDTSNCLQNRPNQKSAKECLPVVSRPVDCSKDKCAGGGGGGSNPSPKPTPTPKAPEPKKEINPPNLEEPSKPKPEESPKPQQPSPKPETPSHEPSNPKEPKPESPKQESPKTEQPKPKPESPKQESPKQEAPKPEQPKPKPESPKQESSKQEPPKPEESPKPEPPKPEESPKPQPPKQETPKPEESPKPQPPKQETPKPEESPKPQPPKQETPKPEESPKPQPPKQEQPPKTEAPKMGSPPLESPVPNDPYDASPIKKRRPQPPSPSTEETKTTSPQSPPVHSPPPPPPVHSPPPPVFSPPPPMHSPPPPVYSPPPPVHSPPPPPVHSPPPPVHSPPPPVHSPPPPVHSPPPPVHSPPPPVHSPPPPVQSPPPPPVFSPPPPAPIYSPPPPPVHSPPPPVHSPPPPPVHSPPPPVHSPPPPVHSPPPPVHSPPPPVHSPPPPSPIYSPPPPVFSPPPKPVTPLPPATSPMANAPTPSSSESGEISTPVQAPTPDSEDIEAPSDSNHSPVFKSSPAPSPDSEPEVEAPVPSSEPEVEAPKQSEATPSSSPPSSNPSPDVTAPPSEDNDDGDNFILPPNIGHQYASPPPPMFPGY.

The signal sequence occupies residues 1-30 (MTRRTMEKPFGCFLLLFCFTISIFFYSAAA). LRR repeat units lie at residues 39–59 (LTRRQLLALSENGDLPDDIEY), 60–84 (EVDLDLKFANNRLKRAYIALQAWKK), 119–143 (VLVVAGIDLNHADIAGYLPPELGLL), 144–166 (TDVALFHVNSNRFCGVIPKSLSK), 168–191 (TLMYEFDVSNNRFVGPFPTVALSW), 192–215 (PSLKFLDIRYNDFEGKLPPEIFDK), 217–238 (LDAIFLNNNRFESTIPETIGKS), 240–261 (ASVVTFAHNKFSGCIPKTIGQM), 262–285 (KNLNEIVFIGNNLSGCLPNEIGSL), 287–309 (NVTVFDASSNGFVGSLPSTLSGL), and 310–332 (ANVEQMDFSYNKFTGFVTDNICK). N-linked (GlcNAc...) asparagine glycans are attached at residues Asn-273 and Asn-287. N-linked (GlcNAc...) asparagine glycosylation is present at Asn-338. The segment covering 355-377 (PGSSQEKQFDDTSNCLQNRPNQK) has biased composition (polar residues). 2 disordered regions span residues 355-380 (PGSSQEKQFDDTSNCLQNRPNQKSAK) and 397-956 (CAGG…FPGY). Positions 408–417 (SPKPTPTPKA) are enriched in pro residues. Composition is skewed to basic and acidic residues over residues 431–441 (EPSKPKPEESP) and 452–534 (TPSH…EESP). Residues 640–830 (QSPPVHSPPP…KPVTPLPPAT (191 aa)) show a composition bias toward pro residues. Residues 651-956 (PPVHSPPPPV…SPPPPMFPGY (306 aa)) are contains the Ser-Pro(4) repeats. The segment covering 837-852 (PTPSSSESGEISTPVQ) has biased composition (polar residues). A compositionally biased stretch (pro residues) spans 947–956 (SPPPPMFPGY).

Post-translationally, hydroxylated on proline residues in the S-P-P-P-P repeat. O-glycosylated on hydroxyprolines. Expressed in flowers, stamen, pollen, and pollinated carpels.

The protein localises to the secreted. Its subcellular location is the cell wall. In terms of biological role, modulates cell morphogenesis by regulating cell wall formation and assembly, and/or growth polarization. In Arabidopsis thaliana (Mouse-ear cress), this protein is Pollen-specific leucine-rich repeat extensin-like protein 1 (PEX1).